The primary structure comprises 367 residues: MSYYNIFLDFLSYIGSGAALFIKIIAVIISVMISVAYLVYMERKVIAAIQLRQGPNVVGPFGLLQPFADAVKLIIKEHIIPFKSNKICFLIAPIITFTLALLGWAVIPFGADVIVNDGYEVIIPNAIANINIGVLYILAISSLGVYGIIIAGWSSNSNYAFLGAIRSASQMISYEVSIGLTIVTVLLATGSLKLGEIVVARHNMPYWIDLLLLPMACIFFISALAETNRHPFDLPEAESELVSGYNVEYSSMPFALFFLGEYANMILINAMAVIFFFGGWYPPLNIGFLYIIPGIVWFVLKVVALLFCFIWIRATIPRYRYDQLMGLGWKVFLPISLLWVVLVSSILVYTDSLPSNNKQYVSHAMHK.

Helical transmembrane passes span 19 to 39 (ALFIKIIAVIISVMISVAYLV), 87 to 107 (ICFLIAPIITFTLALLGWAVI), 132 to 152 (IGVLYILAISSLGVYGIIIAG), 178 to 198 (IGLTIVTVLLATGSLKLGEIV), 204 to 224 (MPYWIDLLLLPMACIFFISAL), 266 to 286 (ILINAMAVIFFFGGWYPPLNI), 291 to 311 (IIPGIVWFVLKVVALLFCFIW), and 328 to 348 (GWKVFLPISLLWVVLVSSILV).

It belongs to the complex I subunit 1 family. In terms of assembly, NDH-1 is composed of 14 different subunits. Subunits NuoA, H, J, K, L, M, N constitute the membrane sector of the complex.

Its subcellular location is the cell inner membrane. It carries out the reaction a quinone + NADH + 5 H(+)(in) = a quinol + NAD(+) + 4 H(+)(out). In terms of biological role, NDH-1 shuttles electrons from NADH, via FMN and iron-sulfur (Fe-S) centers, to quinones in the respiratory chain. The immediate electron acceptor for the enzyme in this species is believed to be ubiquinone. Couples the redox reaction to proton translocation (for every two electrons transferred, four hydrogen ions are translocated across the cytoplasmic membrane), and thus conserves the redox energy in a proton gradient. This subunit may bind ubiquinone. The protein is NADH-quinone oxidoreductase subunit H of Ehrlichia chaffeensis (strain ATCC CRL-10679 / Arkansas).